A 163-amino-acid polypeptide reads, in one-letter code: Nucleotide-binding protein KPN78578_03700 (163 aa).

The protein belongs to the YajQ family.

Nucleotide-binding protein. This chain is Nucleotide-binding protein KPN78578_03700, found in Klebsiella pneumoniae subsp. pneumoniae (strain ATCC 700721 / MGH 78578).